The following is a 157-amino-acid chain: 2-C-methyl-D-erythritol 2,4-cyclodiphosphate synthase (157 aa).

Residues D8 and H10 each coordinate a divalent metal cation. 4-CDP-2-C-methyl-D-erythritol 2-phosphate is bound by residues D8–H10 and H34–S35. H42 is a binding site for a divalent metal cation. 4-CDP-2-C-methyl-D-erythritol 2-phosphate contacts are provided by residues D56–G58, F61–D65, A100–A106, T132–E135, F139, and R142.

The protein belongs to the IspF family. Homotrimer. A divalent metal cation is required as a cofactor.

It catalyses the reaction 4-CDP-2-C-methyl-D-erythritol 2-phosphate = 2-C-methyl-D-erythritol 2,4-cyclic diphosphate + CMP. It participates in isoprenoid biosynthesis; isopentenyl diphosphate biosynthesis via DXP pathway; isopentenyl diphosphate from 1-deoxy-D-xylulose 5-phosphate: step 4/6. Functionally, involved in the biosynthesis of isopentenyl diphosphate (IPP) and dimethylallyl diphosphate (DMAPP), two major building blocks of isoprenoid compounds. Catalyzes the conversion of 4-diphosphocytidyl-2-C-methyl-D-erythritol 2-phosphate (CDP-ME2P) to 2-C-methyl-D-erythritol 2,4-cyclodiphosphate (ME-CPP) with a corresponding release of cytidine 5-monophosphate (CMP). This is 2-C-methyl-D-erythritol 2,4-cyclodiphosphate synthase from Photobacterium profundum (strain SS9).